The chain runs to 156 residues: Small ribosomal subunit protein uS7 (156 aa).

It belongs to the universal ribosomal protein uS7 family. As to quaternary structure, part of the 30S ribosomal subunit. Contacts proteins S9 and S11.

In terms of biological role, one of the primary rRNA binding proteins, it binds directly to 16S rRNA where it nucleates assembly of the head domain of the 30S subunit. Is located at the subunit interface close to the decoding center, probably blocks exit of the E-site tRNA. The chain is Small ribosomal subunit protein uS7 from Magnetococcus marinus (strain ATCC BAA-1437 / JCM 17883 / MC-1).